The primary structure comprises 45 residues: Large ribosomal subunit protein bL34 (45 aa).

The tract at residues 1-45 (MTKRTFGGTSRKRKRVSGFRVRMRSHTGRRVIKSRRKRGRERIAV) is disordered. The segment covering 10-45 (SRKRKRVSGFRVRMRSHTGRRVIKSRRKRGRERIAV) has biased composition (basic residues).

It belongs to the bacterial ribosomal protein bL34 family.

In Prochlorococcus marinus subsp. pastoris (strain CCMP1986 / NIES-2087 / MED4), this protein is Large ribosomal subunit protein bL34.